The following is a 367-amino-acid chain: 2-aminoethylphosphonate--pyruvate transaminase (367 aa).

The residue at position 194 (K194) is an N6-(pyridoxal phosphate)lysine.

It belongs to the class-V pyridoxal-phosphate-dependent aminotransferase family. PhnW subfamily. In terms of assembly, homodimer. Pyridoxal 5'-phosphate serves as cofactor.

The catalysed reaction is (2-aminoethyl)phosphonate + pyruvate = phosphonoacetaldehyde + L-alanine. Functionally, involved in phosphonate degradation. The polypeptide is 2-aminoethylphosphonate--pyruvate transaminase (Salmonella schwarzengrund (strain CVM19633)).